The following is a 321-amino-acid chain: ATP-dependent 6-phosphofructokinase (321 aa).

Glycine 10 contacts ATP. 20–24 lines the ADP pocket; it reads RAVVR. ATP contacts are provided by residues 71–72 and 101–104; these read RD and GEGT. Position 102 (glutamate 102) interacts with Mg(2+). Residue 125–127 coordinates substrate; sequence TID. Aspartate 127 functions as the Proton acceptor in the catalytic mechanism. Arginine 154 lines the ADP pocket. Residues arginine 162 and 169–171 contribute to the substrate site; that span reads MGR. Residues 185–187 and 213–215 each bind ADP; these read GAE and KLH. Residues glutamate 222, arginine 246, and 252–255 each bind substrate; that span reads HIQR.

It belongs to the phosphofructokinase type A (PFKA) family. ATP-dependent PFK group I subfamily. Prokaryotic clade 'B1' sub-subfamily. In terms of assembly, homotetramer. It depends on Mg(2+) as a cofactor.

Its subcellular location is the cytoplasm. It catalyses the reaction beta-D-fructose 6-phosphate + ATP = beta-D-fructose 1,6-bisphosphate + ADP + H(+). The protein operates within carbohydrate degradation; glycolysis; D-glyceraldehyde 3-phosphate and glycerone phosphate from D-glucose: step 3/4. Allosterically activated by ADP and other diphosphonucleosides, and allosterically inhibited by phosphoenolpyruvate. Catalyzes the phosphorylation of D-fructose 6-phosphate to fructose 1,6-bisphosphate by ATP, the first committing step of glycolysis. The chain is ATP-dependent 6-phosphofructokinase from Aquifex aeolicus (strain VF5).